Here is a 218-residue protein sequence, read N- to C-terminus: Adenylate kinase (218 aa).

14–19 (GAGKGT) is an ATP binding site. Residues 34-63 (STGDMFRAAIKAGTELGKQAKALMDEGKLV) form an NMP region. AMP contacts are provided by residues Thr35, Arg40, 61–63 (KLV), 89–92 (GFPR), and Gln96. Residues 126 to 163 (GRRVHQASGRSYHIVYNPPKVEGKDDVTGEDLIIRADD) are LID. ATP contacts are provided by residues Arg127 and 136–137 (SY). Positions 160 and 171 each coordinate AMP. Residue Lys204 coordinates ATP.

It belongs to the adenylate kinase family. Monomer.

The protein localises to the cytoplasm. The catalysed reaction is AMP + ATP = 2 ADP. The protein operates within purine metabolism; AMP biosynthesis via salvage pathway; AMP from ADP: step 1/1. In terms of biological role, catalyzes the reversible transfer of the terminal phosphate group between ATP and AMP. Plays an important role in cellular energy homeostasis and in adenine nucleotide metabolism. This Mannheimia succiniciproducens (strain KCTC 0769BP / MBEL55E) protein is Adenylate kinase.